The sequence spans 347 residues: Protein RecA (347 aa).

67-74 (GPESSGKT) provides a ligand contact to ATP.

The protein belongs to the RecA family.

It is found in the cytoplasm. Can catalyze the hydrolysis of ATP in the presence of single-stranded DNA, the ATP-dependent uptake of single-stranded DNA by duplex DNA, and the ATP-dependent hybridization of homologous single-stranded DNAs. It interacts with LexA causing its activation and leading to its autocatalytic cleavage. This chain is Protein RecA, found in Helicobacter pylori (strain HPAG1).